The following is a 208-amino-acid chain: Negative modulator of initiation of replication (208 aa).

Residues Ala115–Val116 form an interaction with DNA region.

This sequence belongs to the SeqA family. In terms of assembly, homodimer. Polymerizes to form helical filaments.

It localises to the cytoplasm. Its function is as follows. Negative regulator of replication initiation, which contributes to regulation of DNA replication and ensures that replication initiation occurs exactly once per chromosome per cell cycle. Binds to pairs of hemimethylated GATC sequences in the oriC region, thus preventing assembly of replication proteins and re-initiation at newly replicated origins. Repression is relieved when the region becomes fully methylated. The sequence is that of Negative modulator of initiation of replication from Shewanella frigidimarina (strain NCIMB 400).